A 315-amino-acid polypeptide reads, in one-letter code: Holliday junction branch migration complex subunit RuvB (315 aa).

The tract at residues 1–168 (MAKKQEIRPK…FGLIGQISNY (168 aa)) is large ATPase domain (RuvB-L). Residues Ile-7, Arg-8, Gly-49, Lys-52, Thr-53, Ser-54, 115-117 (EDF), Arg-158, Tyr-168, and Arg-205 each bind ATP. Thr-53 contributes to the Mg(2+) binding site. Positions 169 to 239 (QVEDIEKIIK…LVNKTLKQLG (71 aa)) are small ATPAse domain (RuvB-S). The head domain (RuvB-H) stretch occupies residues 242 to 315 (ENGLNESQVK…QKGISYLERI (74 aa)). DNA contacts are provided by Lys-297 and Arg-302.

The protein belongs to the RuvB family. In terms of assembly, homohexamer. Forms an RuvA(8)-RuvB(12)-Holliday junction (HJ) complex. HJ DNA is sandwiched between 2 RuvA tetramers; dsDNA enters through RuvA and exits via RuvB. An RuvB hexamer assembles on each DNA strand where it exits the tetramer. Each RuvB hexamer is contacted by two RuvA subunits (via domain III) on 2 adjacent RuvB subunits; this complex drives branch migration. In the full resolvosome a probable DNA-RuvA(4)-RuvB(12)-RuvC(2) complex forms which resolves the HJ.

The protein resides in the cytoplasm. The catalysed reaction is ATP + H2O = ADP + phosphate + H(+). In terms of biological role, the RuvA-RuvB-RuvC complex processes Holliday junction (HJ) DNA during genetic recombination and DNA repair, while the RuvA-RuvB complex plays an important role in the rescue of blocked DNA replication forks via replication fork reversal (RFR). RuvA specifically binds to HJ cruciform DNA, conferring on it an open structure. The RuvB hexamer acts as an ATP-dependent pump, pulling dsDNA into and through the RuvAB complex. RuvB forms 2 homohexamers on either side of HJ DNA bound by 1 or 2 RuvA tetramers; 4 subunits per hexamer contact DNA at a time. Coordinated motions by a converter formed by DNA-disengaged RuvB subunits stimulates ATP hydrolysis and nucleotide exchange. Immobilization of the converter enables RuvB to convert the ATP-contained energy into a lever motion, pulling 2 nucleotides of DNA out of the RuvA tetramer per ATP hydrolyzed, thus driving DNA branch migration. The RuvB motors rotate together with the DNA substrate, which together with the progressing nucleotide cycle form the mechanistic basis for DNA recombination by continuous HJ branch migration. Branch migration allows RuvC to scan DNA until it finds its consensus sequence, where it cleaves and resolves cruciform DNA. The chain is Holliday junction branch migration complex subunit RuvB from Mycoplasmopsis pulmonis (strain UAB CTIP) (Mycoplasma pulmonis).